The sequence spans 69 residues: U2-agatoxin-Ao1o (69 aa).

The N-terminal stretch at 1–20 (MKAIISLLLISAMVFSMFEA) is a signal peptide. Positions 21-34 (VPVRRRFTAFEGER) are excised as a propeptide. Intrachain disulfides connect Cys-36/Cys-52, Cys-43/Cys-57, and Cys-51/Cys-67. Leu-68 carries the post-translational modification Leucine amide.

It belongs to the neurotoxin 01 (U2-agtx) family. Expressed by the venom gland.

Its subcellular location is the secreted. In terms of biological role, insect active toxin causing rapid but reversible paralysis in crickets. No activity shown in mammals. Does not show effect on mammalian voltage-gated calcium channels. The protein is U2-agatoxin-Ao1o of Agelena orientalis (Funnel-web spider).